Reading from the N-terminus, the 650-residue chain is Probable LIM domain-containing serine/threonine-protein kinase DDB_G0287001 (650 aa).

2 consecutive LIM zinc-binding domains span residues N4–A63 and R64–K122. 3 disordered regions span residues K118–K138, L171–M197, and L293–T320. The segment covering S173–N188 has biased composition (gly residues). Residues V386–L643 form the Protein kinase domain. Residues I392 to V400 and K413 contribute to the ATP site. The active-site Proton acceptor is the D509.

This sequence belongs to the protein kinase superfamily. TKL Ser/Thr protein kinase family.

It carries out the reaction L-seryl-[protein] + ATP = O-phospho-L-seryl-[protein] + ADP + H(+). It catalyses the reaction L-threonyl-[protein] + ATP = O-phospho-L-threonyl-[protein] + ADP + H(+). This Dictyostelium discoideum (Social amoeba) protein is Probable LIM domain-containing serine/threonine-protein kinase DDB_G0287001.